The sequence spans 248 residues: MAGHSQFKNIMHRKGRQDAMKSKLFGKLAREITVAAKLGTPDPAMNPRLRAAVVAARAENMPKDNIERAIKKALGGEGENYAEIRYEGYGPGGVAVIVEALTDNRNRAASDIRSFFTKSGGNLGETGSVSFMFDRVGIIEFDRSVASDDSVLDAAIEAGADDVISGEGGHEVYASPDSFHEVAKNLEAKFGEPRKAALTWKPQNTVAVDDETGEKLVKLMDLLNEHDDVQNVYANFEISDALMAKMGG.

It belongs to the TACO1 family.

The protein resides in the cytoplasm. This is Probable transcriptional regulatory protein BRADO1143 from Bradyrhizobium sp. (strain ORS 278).